A 327-amino-acid polypeptide reads, in one-letter code: UPF0285 protein Maeo_0978 (327 aa).

This sequence belongs to the UPF0285 family.

In Methanococcus aeolicus (strain ATCC BAA-1280 / DSM 17508 / OCM 812 / Nankai-3), this protein is UPF0285 protein Maeo_0978.